The primary structure comprises 180 residues: Acireductone dioxygenase (180 aa).

Fe(2+) is bound by residues His97, His99, Glu103, and His141. Residues His97, His99, Glu103, and His141 each coordinate Ni(2+).

The protein belongs to the acireductone dioxygenase (ARD) family. As to quaternary structure, monomer. The cofactor is Fe(2+). Mg(2+) serves as cofactor. Requires Ni(2+) as cofactor. It depends on Mn(2+) as a cofactor. Co(2+) is required as a cofactor.

The enzyme catalyses 1,2-dihydroxy-5-(methylsulfanyl)pent-1-en-3-one + O2 = 3-(methylsulfanyl)propanoate + CO + formate + 2 H(+). It carries out the reaction 1,2-dihydroxy-5-(methylsulfanyl)pent-1-en-3-one + O2 = 4-methylsulfanyl-2-oxobutanoate + formate + 2 H(+). Its pathway is amino-acid biosynthesis; L-methionine biosynthesis via salvage pathway; L-methionine from S-methyl-5-thio-alpha-D-ribose 1-phosphate: step 5/6. Functionally, catalyzes 2 different reactions between oxygen and the acireductone 1,2-dihydroxy-3-keto-5-methylthiopentene (DHK-MTPene) depending upon the metal bound in the active site. Fe-containing acireductone dioxygenase (Fe-ARD) produces formate and 2-keto-4-methylthiobutyrate (KMTB), the alpha-ketoacid precursor of methionine in the methionine recycle pathway. Ni-containing acireductone dioxygenase (Ni-ARD) produces methylthiopropionate, carbon monoxide and formate, and does not lie on the methionine recycle pathway. This is Acireductone dioxygenase (mtnD) from Klebsiella oxytoca.